An 82-amino-acid chain; its full sequence is Small ribosomal subunit protein uS17 (82 aa).

It belongs to the universal ribosomal protein uS17 family. Part of the 30S ribosomal subunit.

Functionally, one of the primary rRNA binding proteins, it binds specifically to the 5'-end of 16S ribosomal RNA. The sequence is that of Small ribosomal subunit protein uS17 from Azorhizobium caulinodans (strain ATCC 43989 / DSM 5975 / JCM 20966 / LMG 6465 / NBRC 14845 / NCIMB 13405 / ORS 571).